A 167-amino-acid polypeptide reads, in one-letter code: Photosystem I assembly protein Ycf3 (167 aa).

TPR repeat units lie at residues 35-68 (AFTY…EIDP), 72-105 (SYIL…NPSL), and 120-153 (GEQA…APNN).

Belongs to the Ycf3 family.

It localises to the plastid. It is found in the chloroplast thylakoid membrane. Functionally, essential for the assembly of the photosystem I (PSI) complex. May act as a chaperone-like factor to guide the assembly of the PSI subunits. This chain is Photosystem I assembly protein Ycf3, found in Zygnema circumcarinatum (Green alga).